The following is a 241-amino-acid chain: Probable transcriptional regulatory protein Daro_4067 (241 aa).

The disordered stretch occupies residues 1 to 22 (MAGHSKWANIQHRKGRQDEKRG).

It belongs to the TACO1 family.

Its subcellular location is the cytoplasm. The protein is Probable transcriptional regulatory protein Daro_4067 of Dechloromonas aromatica (strain RCB).